The following is an 86-amino-acid chain: Neurotoxin-like protein pMD18-NTL3 (86 aa).

The first 21 residues, Met1–Thr21, serve as a signal peptide directing secretion. Cystine bridges form between Cys24/Cys45, Cys38/Cys62, Cys66/Cys78, and Cys79/Cys84.

It belongs to the three-finger toxin family. Short-chain subfamily. Orphan group IX sub-subfamily. In terms of tissue distribution, expressed by the venom gland.

It localises to the secreted. The protein is Neurotoxin-like protein pMD18-NTL3 of Bungarus multicinctus (Many-banded krait).